The sequence spans 892 residues: Alanine--tRNA ligase (892 aa).

Positions 574, 578, 676, and 680 each coordinate Zn(2+).

The protein belongs to the class-II aminoacyl-tRNA synthetase family. It depends on Zn(2+) as a cofactor.

The protein localises to the cytoplasm. The catalysed reaction is tRNA(Ala) + L-alanine + ATP = L-alanyl-tRNA(Ala) + AMP + diphosphate. Functionally, catalyzes the attachment of alanine to tRNA(Ala) in a two-step reaction: alanine is first activated by ATP to form Ala-AMP and then transferred to the acceptor end of tRNA(Ala). Also edits incorrectly charged Ser-tRNA(Ala) and Gly-tRNA(Ala) via its editing domain. In Prochlorococcus marinus (strain SARG / CCMP1375 / SS120), this protein is Alanine--tRNA ligase.